Consider the following 92-residue polypeptide: DNA-directed RNA polymerase subunit omega (92 aa).

Belongs to the RNA polymerase subunit omega family. The RNAP catalytic core consists of 2 alpha, 1 beta, 1 beta' and 1 omega subunit. When a sigma factor is associated with the core the holoenzyme is formed, which can initiate transcription.

The catalysed reaction is RNA(n) + a ribonucleoside 5'-triphosphate = RNA(n+1) + diphosphate. Its function is as follows. Promotes RNA polymerase assembly. Latches the N- and C-terminal regions of the beta' subunit thereby facilitating its interaction with the beta and alpha subunits. The chain is DNA-directed RNA polymerase subunit omega from Shewanella frigidimarina (strain NCIMB 400).